A 330-amino-acid polypeptide reads, in one-letter code: Embigin (330 aa).

Residues M1–G33 form the signal peptide. The Extracellular segment spans residues D34–E254. 2 Ig-like V-type domains span residues P38–P161 and K162–V256. N-linked (GlcNAc...) asparagine glycans are attached at residues N55, N62, N70, N101, N118, N191, N198, N216, and N221. 2 disulfides stabilise this stretch: C89–C145 and C182–C240. A helical transmembrane segment spans residues L255 to L283. At C284–Q330 the chain is on the cytoplasmic side. Residues N293–D311 show a composition bias toward basic and acidic residues. Positions N293 to Q330 are disordered. A Phosphoserine modification is found at S312.

Interacts with SLC16A1, SLC16A6 and SLC16A7. As to expression, only member of the immunoglobulin superfamily to be expressed in embryonal carcinoma cells, which resemble multipotential cells of early embryos.

The protein resides in the cell membrane. The protein localises to the synapse. Its function is as follows. Plays a role in targeting the monocarboxylate transporters SLC16A1, SLC16A6 and SLC16A7 to the cell membrane. Plays a role in the outgrowth of motoneurons and in the formation of neuromuscular junctions. Following muscle denervation, promotes nerve terminal sprouting and the formation of additional acetylcholine receptor clusters at synaptic sites without affecting terminal Schwann cell number or morphology. Delays the retraction of terminal sprouts following re-innervation of denervated endplates. The chain is Embigin (Emb) from Mus musculus (Mouse).